The chain runs to 618 residues: Methylmalonyl-CoA mutase small subunit (618 aa).

The protein belongs to the methylmalonyl-CoA mutase family. In terms of assembly, heterodimer of an alpha and a beta chain. Adenosylcob(III)alamin is required as a cofactor.

It carries out the reaction (R)-methylmalonyl-CoA = succinyl-CoA. It participates in metabolic intermediate metabolism; propanoyl-CoA degradation; succinyl-CoA from propanoyl-CoA: step 3/3. In terms of biological role, catalyzes the isomerization of succinyl-CoA to methylmalonyl-CoA during synthesis of propionate from tricarboxylic acid-cycle intermediates. The chain is Methylmalonyl-CoA mutase small subunit (mutA) from Porphyromonas gingivalis (strain ATCC BAA-308 / W83).